A 462-amino-acid polypeptide reads, in one-letter code: Myrosinase-binding protein 1 (462 aa).

The segment at M1–G23 is disordered. 3 Jacalin-type lectin domains span residues P6–P148, P157–P300, and T310–P453. Residues G13–G23 show a composition bias toward basic and acidic residues.

This sequence belongs to the jacalin lectin family. Expressed exclusively in flowers, in male and female organs, petals and pedicels. Not detected in pollen grains or sepals.

The protein is Myrosinase-binding protein 1 (MBP1) of Arabidopsis thaliana (Mouse-ear cress).